A 428-amino-acid polypeptide reads, in one-letter code: Chaperone SurA (428 aa).

An N-terminal signal peptide occupies residues 1–13; that stretch reads MLGALLLSGAVHA. 2 consecutive PpiC domains span residues 164–265 and 276–375; these read SEEF…KLLE and RDEV…EVLG.

Its subcellular location is the periplasm. The catalysed reaction is [protein]-peptidylproline (omega=180) = [protein]-peptidylproline (omega=0). Functionally, chaperone involved in the correct folding and assembly of outer membrane proteins. Recognizes specific patterns of aromatic residues and the orientation of their side chains, which are found more frequently in integral outer membrane proteins. May act in both early periplasmic and late outer membrane-associated steps of protein maturation. The chain is Chaperone SurA from Pseudomonas syringae pv. tomato (strain ATCC BAA-871 / DC3000).